Here is a 262-residue protein sequence, read N- to C-terminus: Acyl-[acyl-carrier-protein]--UDP-N-acetylglucosamine O-acyltransferase (262 aa).

It belongs to the transferase hexapeptide repeat family. LpxA subfamily. In terms of assembly, homotrimer.

The protein localises to the cytoplasm. It catalyses the reaction a (3R)-hydroxyacyl-[ACP] + UDP-N-acetyl-alpha-D-glucosamine = a UDP-3-O-[(3R)-3-hydroxyacyl]-N-acetyl-alpha-D-glucosamine + holo-[ACP]. It participates in glycolipid biosynthesis; lipid IV(A) biosynthesis; lipid IV(A) from (3R)-3-hydroxytetradecanoyl-[acyl-carrier-protein] and UDP-N-acetyl-alpha-D-glucosamine: step 1/6. Involved in the biosynthesis of lipid A, a phosphorylated glycolipid that anchors the lipopolysaccharide to the outer membrane of the cell. The polypeptide is Acyl-[acyl-carrier-protein]--UDP-N-acetylglucosamine O-acyltransferase (Yersinia enterocolitica).